A 348-amino-acid polypeptide reads, in one-letter code: Phosphoribosylformylglycinamidine cyclo-ligase (348 aa).

The protein belongs to the AIR synthase family.

It is found in the cytoplasm. The enzyme catalyses 2-formamido-N(1)-(5-O-phospho-beta-D-ribosyl)acetamidine + ATP = 5-amino-1-(5-phospho-beta-D-ribosyl)imidazole + ADP + phosphate + H(+). Its pathway is purine metabolism; IMP biosynthesis via de novo pathway; 5-amino-1-(5-phospho-D-ribosyl)imidazole from N(2)-formyl-N(1)-(5-phospho-D-ribosyl)glycinamide: step 2/2. The chain is Phosphoribosylformylglycinamidine cyclo-ligase from Geobacter sulfurreducens (strain ATCC 51573 / DSM 12127 / PCA).